A 215-amino-acid chain; its full sequence is Protein GET1 (215 aa).

Residues 1–4 (MPSL) lie on the Lumenal side of the membrane. The helical transmembrane segment at 5-24 (LILIFTIEVAVELINTIGAA) threads the bilayer. The Cytoplasmic segment spans residues 25 to 110 (TINNLLWRIF…NFDKYITGIR (86 aa)). A coiled-coil region spans residues 72–104 (AKWAKLRRQHDKLLEQLEKKKAALDSTKGNFDK). A helical transmembrane segment spans residues 111-131 (WVGTQGLRYFLPFWYAKVPMF). Residues 132-155 (WLPYGWFPYYAEWLVSFPRAPMGS) lie on the Lumenal side of the membrane. The chain crosses the membrane as a helical span at residues 156-172 (VSIASWQLACTGFVVLI). Residues 173–215 (KDAITALVVFVMGMRQSNVKQAVPVKAVSGEKASDEKEGKKEL) are Cytoplasmic-facing.

Belongs to the WRB/GET1 family. Interacts with GET3.

The protein localises to the endoplasmic reticulum membrane. Its function is as follows. Required for the post-translational delivery of tail-anchored (TA) proteins to the endoplasmic reticulum. Acts as a membrane receptor for soluble GET3, which recognizes and selectively binds the transmembrane domain of TA proteins in the cytosol. This Pyricularia oryzae (strain 70-15 / ATCC MYA-4617 / FGSC 8958) (Rice blast fungus) protein is Protein GET1.